Here is a 334-residue protein sequence, read N- to C-terminus: HTH-type transcriptional repressor PurR (334 aa).

Positions 2 to 56 constitute an HTH lacI-type domain; sequence ATIKDVARLAGVSTTTVSHVINKTRFVAEATQEKVMKAVDELNYAPSAVARSLKC. Residues 4-23 constitute a DNA-binding region (H-T-H motif); that stretch reads IKDVARLAGVSTTTVSHVIN. Residues 48-56 mediate DNA binding; the sequence is SAVARSLKC. 4 residues coordinate hypoxanthine: phenylalanine 73, lysine 189, phenylalanine 220, and aspartate 274.

In terms of assembly, homodimer.

It participates in purine metabolism; purine nucleotide biosynthesis [regulation]. Is the main repressor of the genes involved in the de novo synthesis of purine nucleotides, regulating purB, purC, purEK, purF, purHD, purL, purMN and guaBA expression. PurR is allosterically activated to bind its cognate DNA by binding the purine corepressors, hypoxanthine or guanine, thereby effecting transcription repression. This Vibrio vulnificus (strain CMCP6) protein is HTH-type transcriptional repressor PurR.